The following is a 142-amino-acid chain: Spliceosomal protein DIB1 (142 aa).

Belongs to the DIM1 family. As to quaternary structure, component of the 25S [U4/U6.U5] tri-snRNP.

The protein resides in the nucleus. Essential role in pre-mRNA splicing. Also essential for entry into mitosis (G2/M progression) as well as for chromosome segregation during mitosis. In Candida glabrata (strain ATCC 2001 / BCRC 20586 / JCM 3761 / NBRC 0622 / NRRL Y-65 / CBS 138) (Yeast), this protein is Spliceosomal protein DIB1 (DIB1).